A 175-amino-acid polypeptide reads, in one-letter code: Universal stress protein A-like protein (175 aa).

11 residues coordinate AMP: alanine 11, valine 12, asparagine 13, serine 26, cysteine 27, valine 53, glycine 131, arginine 133, threonine 145, valine 146, and serine 147.

Belongs to the universal stress protein A family. Homohexamer.

In Arabidopsis thaliana (Mouse-ear cress), this protein is Universal stress protein A-like protein.